A 70-amino-acid chain; its full sequence is UPF0352 protein PBPRA2586 (70 aa).

This sequence belongs to the UPF0352 family.

This Photobacterium profundum (strain SS9) protein is UPF0352 protein PBPRA2586.